We begin with the raw amino-acid sequence, 155 residues long: Ribonuclease H (155 aa).

The region spanning 1-143 is the RNase H type-1 domain; it reads MNQVEIYTDG…ADALANRGVD (143 aa). Mg(2+) is bound by residues aspartate 9, glutamate 47, aspartate 69, and aspartate 135.

It belongs to the RNase H family. In terms of assembly, monomer. It depends on Mg(2+) as a cofactor.

The protein localises to the cytoplasm. The catalysed reaction is Endonucleolytic cleavage to 5'-phosphomonoester.. Its function is as follows. Endonuclease that specifically degrades the RNA of RNA-DNA hybrids. The polypeptide is Ribonuclease H (Verminephrobacter eiseniae (strain EF01-2)).